The chain runs to 275 residues: MLLAIDAGNTNIVFALVDGREIRARWRIATEGRRTADEYAVWLVQLMAIGGFTREEIDSVVICTVVPRTLHNLEVLSAKYFGVKALIAGTPPLDWGIDIDVISPETVGADRLVNALAAHHLHSGHKIAIDFGTATTFDWVDEKGAYRGGIIAPGINLSLDALVGKAARLPRIAIEIPKTDSVIGRSTEESMHSGIYWGYIAMIEGLTERMKQEIGQPVTVIATGGLASLFAVHTSVFDVIEPDLTIRGMALLYEQKAPTKFTAHSGGFAADFSPL.

6 to 13 lines the ATP pocket; it reads DAGNTNIV. Residue 108–111 participates in substrate binding; sequence GADR. Residue aspartate 110 is the Proton acceptor of the active site. Aspartate 130 serves as a coordination point for K(+). Threonine 133 lines the ATP pocket. Threonine 187 lines the substrate pocket.

Belongs to the type III pantothenate kinase family. In terms of assembly, homodimer. It depends on NH4(+) as a cofactor. The cofactor is K(+).

The protein localises to the cytoplasm. It catalyses the reaction (R)-pantothenate + ATP = (R)-4'-phosphopantothenate + ADP + H(+). Its pathway is cofactor biosynthesis; coenzyme A biosynthesis; CoA from (R)-pantothenate: step 1/5. In terms of biological role, catalyzes the phosphorylation of pantothenate (Pan), the first step in CoA biosynthesis. The chain is Type III pantothenate kinase from Zymomonas mobilis subsp. mobilis (strain ATCC 31821 / ZM4 / CP4).